The sequence spans 240 residues: MFLEVETHCHTIASGHAYNNLEEMVLEAQKKGLKGICITDHGPEMPGSCSSLYFYNLIVVPRKINGIMVFRGCEANIVDYEGRIDIPEDALKRLDFVIASLHDVCIPSGTVSDHTRALIGAIKNPYIHCIGHPGNPLYEIDKEEVVLAAKEYKKAIEINNSSFYVREKSKENCIEILKLCKKYGVYIAMGSDAHYKADIGRCEITQKLVCEYEFPPELIVNKSLESFISFLKLHGKDIDI.

Zn(2+) is bound by residues His-8, His-10, His-16, His-41, Glu-74, His-102, His-132, Asp-192, and His-194.

The protein belongs to the PHP family. Zn(2+) is required as a cofactor.

This is Probable phosphatase Athe_0620 from Caldicellulosiruptor bescii (strain ATCC BAA-1888 / DSM 6725 / KCTC 15123 / Z-1320) (Anaerocellum thermophilum).